The following is a 358-amino-acid chain: MQEWFQNLFAATLGLGDLGITVGLVVSVIVKIVIILIPLILTVAYLTYFERKVIGFMQLRVGPNVTGPWGLIQPFADVFKLLFKEVTRPRLSNKALFYIGPIMSLAPSFAAWAVIPFNEEWVLTNINIGLLYILMITSLSVYGVIIAGWASNSKYSFLGAMRASAQSISYEIAMSAALVCVVMVSGSMNFSDIVAAQAKGIAGGSVFSWNWLPLFPIFIVYLISAVAETNRAPFDVAEGESEIVAGHHVEYSGFAFALFFLAEYIFMILISALTSLMFLGGWLSPFPQSWGFIGTPSAFWMFVKMAAVLYWYLWIRATFPRYRYDQIMRLGWKVLIPIGFAYIVVLGVWMISPLNLWK.

The next 8 membrane-spanning stretches (helical) occupy residues Ile-20 to Ile-40, Ala-95 to Ile-115, Ile-128 to Gly-148, Ile-168 to Met-188, Val-206 to Val-226, Gly-253 to Leu-273, Trp-290 to Tyr-310, and Val-334 to Leu-354.

The protein belongs to the complex I subunit 1 family. NDH-1 is composed of 14 different subunits. Subunits NuoA, H, J, K, L, M, N constitute the membrane sector of the complex.

It localises to the cell inner membrane. The enzyme catalyses a quinone + NADH + 5 H(+)(in) = a quinol + NAD(+) + 4 H(+)(out). In terms of biological role, NDH-1 shuttles electrons from NADH, via FMN and iron-sulfur (Fe-S) centers, to quinones in the respiratory chain. The immediate electron acceptor for the enzyme in this species is believed to be ubiquinone. Couples the redox reaction to proton translocation (for every two electrons transferred, four hydrogen ions are translocated across the cytoplasmic membrane), and thus conserves the redox energy in a proton gradient. This subunit may bind ubiquinone. The chain is NADH-quinone oxidoreductase subunit H from Neisseria meningitidis serogroup C (strain 053442).